The following is a 116-amino-acid chain: Iron-sulfur cluster insertion protein ErpA (116 aa).

Residues cysteine 44, cysteine 108, and cysteine 110 each contribute to the iron-sulfur cluster site.

Belongs to the HesB/IscA family. As to quaternary structure, homodimer. Iron-sulfur cluster is required as a cofactor.

Required for insertion of 4Fe-4S clusters for at least IspG. This Stutzerimonas stutzeri (strain A1501) (Pseudomonas stutzeri) protein is Iron-sulfur cluster insertion protein ErpA.